The sequence spans 470 residues: Glutamate--tRNA ligase (470 aa).

A 'HIGH' region motif is present at residues 9-19 (PSPTGYLHVGG). The 'KMSKS' region signature appears at 236 to 240 (RLSKR). Lys239 is an ATP binding site.

It belongs to the class-I aminoacyl-tRNA synthetase family. Glutamate--tRNA ligase type 1 subfamily. Monomer.

It is found in the cytoplasm. The catalysed reaction is tRNA(Glu) + L-glutamate + ATP = L-glutamyl-tRNA(Glu) + AMP + diphosphate. In terms of biological role, catalyzes the attachment of glutamate to tRNA(Glu) in a two-step reaction: glutamate is first activated by ATP to form Glu-AMP and then transferred to the acceptor end of tRNA(Glu). The sequence is that of Glutamate--tRNA ligase from Colwellia psychrerythraea (strain 34H / ATCC BAA-681) (Vibrio psychroerythus).